We begin with the raw amino-acid sequence, 539 residues long: MQINGITPQALTAYGIHDVRDIVYNPSYELLFEEERSPTLQGYERGIETQLGAVAVDTGIFTGRSPKDKYIVRDDVTRDTVWWSDQGKGKNDNHPLSQETWTHLKQLVTTQLSGKRLFIIDAFCGANPDSRLSVRFVTEVAWQAHFVKNMFIRPSDEELEGFEPDFIVMNGAKCTNPNWQEQGLNSENFVAFNLTERIQLIGGTWYGGEMKKGMFSIMNYLLPLKGIASMHCSANVGEKGDVAVFFGLSGTGKTTLSTDPKRQLIGDDEHGWDDDGVFNFEGGCYAKTIKLSKEAEPDIYGAIKRDALLENVTVLADGTVDFNDGSKTENTRVSYPIYHIQNIVKPVSKAGHATKVIFLTADAFGVLPPVSRLTSDQTQYHFLSGFTAKLAGTERGVTEPTPTFSACFGAAFLMLHPTQYAEVLVKRMKAAGAQAYLVNTGWNGSGKRISIKDTRGIIDAILNGSIDDAEMQTLPVFDLAIPTSLPGVNPDILDPRDTYASVEQWQEKADDLAQRFITNFDKYTDAPAGAALVKAGPKR.

Residues arginine 64, tyrosine 206, and lysine 212 each coordinate substrate. Residues lysine 212, histidine 231, and glycine 247–threonine 255 contribute to the ATP site. 2 residues coordinate Mn(2+): lysine 212 and histidine 231. Aspartate 268 is a binding site for Mn(2+). Residues glutamate 296, arginine 332, arginine 448–isoleucine 449, and threonine 454 contribute to the ATP site. Residue arginine 332 participates in substrate binding.

It belongs to the phosphoenolpyruvate carboxykinase (ATP) family. As to quaternary structure, monomer. It depends on Mn(2+) as a cofactor.

The protein localises to the cytoplasm. The catalysed reaction is oxaloacetate + ATP = phosphoenolpyruvate + ADP + CO2. The protein operates within carbohydrate biosynthesis; gluconeogenesis. Its function is as follows. Involved in the gluconeogenesis. Catalyzes the conversion of oxaloacetate (OAA) to phosphoenolpyruvate (PEP) through direct phosphoryl transfer between the nucleoside triphosphate and OAA. This is Phosphoenolpyruvate carboxykinase (ATP) from Pectobacterium carotovorum subsp. carotovorum (strain PC1).